A 407-amino-acid chain; its full sequence is L-amino-acid oxidase (407 aa).

An intrachain disulfide couples Cys-10 to Cys-94. The N-linked (GlcNAc...) asparagine glycan is linked to Asn-93. His-144 is a substrate binding site. An FAD-binding site is contributed by Val-182. An intrachain disulfide couples Cys-252 to Cys-333. An N-linked (GlcNAc...) asparagine glycan is attached at Asn-282. Substrate is bound at residue Tyr-293. FAD is bound by residues Glu-378 and 385-390 (GWIDST). Residue 385-386 (GW) participates in substrate binding.

Belongs to the flavin monoamine oxidase family. FIG1 subfamily. In terms of assembly, homodimer; non-covalently linked. The cofactor is FAD. In terms of tissue distribution, expressed by the venom gland.

It is found in the secreted. The enzyme catalyses an L-alpha-amino acid + O2 + H2O = a 2-oxocarboxylate + H2O2 + NH4(+). The catalysed reaction is L-leucine + O2 + H2O = 4-methyl-2-oxopentanoate + H2O2 + NH4(+). It carries out the reaction L-phenylalanine + O2 + H2O = 3-phenylpyruvate + H2O2 + NH4(+). It catalyses the reaction L-isoleucine + O2 + H2O = (S)-3-methyl-2-oxopentanoate + H2O2 + NH4(+). The enzyme catalyses L-aspartate + O2 + H2O = oxaloacetate + H2O2 + NH4(+). The catalysed reaction is L-lysine + O2 + H2O = 6-amino-2-oxohexanoate + H2O2 + NH4(+). It carries out the reaction L-glutamate + O2 + H2O = H2O2 + 2-oxoglutarate + NH4(+). In terms of biological role, catalyzes an oxidative deamination of predominantly hydrophobic and aromatic L-amino acids, thus producing hydrogen peroxide that may contribute to the diverse toxic effects of this enzyme. Is highly active on L-Leu followed by L-Phe and L-Ile, moderately active on L-Asp, L-Glu, and L-Lys, and not active on L-Pro, L-Asn, L-Gly, L-Ser and L-Cys. Exhibits diverse biological activities such as antibacterial activity (Minimal inhibitory concentrations (MIC) are 9.0 ug/ml against S.aureus, 144.0 ug/ml against P.aeruginosa and 288.0 ug/ml against E.coli) and inhibition of ADP- and TMVA-induced platelet aggregation. Effects of snake L-amino oxidases on platelets are controversial, since they either induce aggregation or inhibit agonist-induced aggregation. These different effects are probably due to different experimental conditions. Unlike other snake venom L-amino acid oxidases, does not induce hemorrhage. This protein may also induce hemolysis, edema, apoptosis and have antiparasitic activities. This is L-amino-acid oxidase from Daboia siamensis (Eastern Russel's viper).